Reading from the N-terminus, the 170-residue chain is Envelope protein 166 (170 aa).

A topological domain (intravirion) is located at residue methionine 1. Residues 2–22 (FYPVVQVLIGIILVIILILGF) form a helical membrane-spanning segment. The Virion surface segment spans residues 23-170 (YHMKHKPPKK…TVMGIARNVL (148 aa)).

This sequence belongs to the asfivirus envelope protein p22 family.

The protein resides in the virion membrane. Its subcellular location is the host cell membrane. In Ornithodoros (relapsing fever ticks), this protein is Envelope protein 166.